Consider the following 142-residue polypeptide: Large ribosomal subunit protein uL13 (142 aa).

Belongs to the universal ribosomal protein uL13 family. In terms of assembly, part of the 50S ribosomal subunit.

This protein is one of the early assembly proteins of the 50S ribosomal subunit, although it is not seen to bind rRNA by itself. It is important during the early stages of 50S assembly. The protein is Large ribosomal subunit protein uL13 of Edwardsiella ictaluri (strain 93-146).